Here is a 362-residue protein sequence, read N- to C-terminus: 2-aminoethylphosphonate--pyruvate transaminase (362 aa).

Lysine 193 is modified (N6-(pyridoxal phosphate)lysine).

This sequence belongs to the class-V pyridoxal-phosphate-dependent aminotransferase family. PhnW subfamily. As to quaternary structure, homodimer. It depends on pyridoxal 5'-phosphate as a cofactor.

It carries out the reaction (2-aminoethyl)phosphonate + pyruvate = phosphonoacetaldehyde + L-alanine. Its function is as follows. Involved in phosphonate degradation. The chain is 2-aminoethylphosphonate--pyruvate transaminase from Bacteroides fragilis (strain YCH46).